The sequence spans 248 residues: Probable proteasome subunit alpha type-3 (248 aa).

This sequence belongs to the peptidase T1A family. As to quaternary structure, the 26S proteasome consists of a 20S proteasome core and two 19S regulatory subunits. The 20S proteasome core is composed of 28 subunits that are arranged in four stacked rings, resulting in a barrel-shaped structure. The two end rings are each formed by seven alpha subunits, and the two central rings are each formed by seven beta subunits. The catalytic chamber with the active sites is on the inside of the barrel.

The protein resides in the cytoplasm. The protein localises to the nucleus. Its function is as follows. The proteasome is a multicatalytic proteinase complex which is characterized by its ability to cleave peptides with Arg, Phe, Tyr, Leu, and Glu adjacent to the leaving group at neutral or slightly basic pH. The proteasome has an ATP-dependent proteolytic activity. The sequence is that of Probable proteasome subunit alpha type-3 from Schizosaccharomyces pombe (strain 972 / ATCC 24843) (Fission yeast).